The primary structure comprises 823 residues: Leucine--tRNA ligase (823 aa).

The short motif at Pro55–His65 is the 'HIGH' region element. Positions Lys590–Ser594 match the 'KMSKS' region motif. Lys593 lines the ATP pocket.

The protein belongs to the class-I aminoacyl-tRNA synthetase family.

The protein localises to the cytoplasm. The catalysed reaction is tRNA(Leu) + L-leucine + ATP = L-leucyl-tRNA(Leu) + AMP + diphosphate. The polypeptide is Leucine--tRNA ligase (Deinococcus radiodurans (strain ATCC 13939 / DSM 20539 / JCM 16871 / CCUG 27074 / LMG 4051 / NBRC 15346 / NCIMB 9279 / VKM B-1422 / R1)).